The primary structure comprises 494 residues: WD repeat-containing protein 37 (494 aa).

The disordered stretch occupies residues 1–38 (MPTESGSWAAARQTKQKRKSHSLSIKRTNSSEQDRPGL). Polar residues predominate over residues 22–31 (SLSIKRTNSS). 2 WD repeats span residues 154-194 (GHRD…CLIK) and 197-236 (GHAG…PTPQ). Positions 236–266 (QPTADTSISGEEEVDFSDKDENDGDGDASSD) are disordered. Residues 245 to 263 (GEEEVDFSDKDENDGDGDA) are compositionally biased toward acidic residues. WD repeat units lie at residues 279-318 (SHQG…LVHS), 321-360 (GHDQ…IHSV), 365-403 (GHTD…SPIA), 406-445 (RTDS…LARL), and 452-493 (GHRR…LLQE).

Its subcellular location is the cytoplasm. It is found in the nucleus. This chain is WD repeat-containing protein 37 (wdr37), found in Xenopus tropicalis (Western clawed frog).